A 322-amino-acid chain; its full sequence is NADH-cytochrome b5 reductase 2 (322 aa).

Residues 32–48 (LAPIYISVGLAGLGVGL) form a helical membrane-spanning segment. The FAD-binding FR-type domain maps to 72 to 176 (QGWVDLKLSE…KGPIPKYPWE (105 aa)). 179–214 (KHKHICLIAGGTGITPMYQLARQIFKNPEDQTKVTL) is a binding site for FAD.

The protein belongs to the flavoprotein pyridine nucleotide cytochrome reductase family. FAD is required as a cofactor.

It is found in the mitochondrion outer membrane. It catalyses the reaction 2 Fe(III)-[cytochrome b5] + NADH = 2 Fe(II)-[cytochrome b5] + NAD(+) + H(+). Its function is as follows. May mediate the reduction of outer membrane cytochrome b5. The protein is NADH-cytochrome b5 reductase 2 (mcr1) of Aspergillus clavatus (strain ATCC 1007 / CBS 513.65 / DSM 816 / NCTC 3887 / NRRL 1 / QM 1276 / 107).